Reading from the N-terminus, the 111-residue chain is Cytochrome c (111 aa).

Position 1 is an N-acetylalanine (alanine 1). Residues cysteine 22, cysteine 25, and histidine 26 each contribute to the heme c site. N6,N6,N6-trimethyllysine is present on lysine 80. Residue methionine 88 coordinates heme c. Lysine 94 carries the N6,N6,N6-trimethyllysine modification.

The protein belongs to the cytochrome c family. Post-translationally, binds 1 heme c group covalently per subunit.

Its subcellular location is the mitochondrion intermembrane space. In terms of biological role, electron carrier protein. The oxidized form of the cytochrome c heme group can accept an electron from the heme group of the cytochrome c1 subunit of cytochrome reductase. Cytochrome c then transfers this electron to the cytochrome oxidase complex, the final protein carrier in the mitochondrial electron-transport chain. The protein is Cytochrome c of Gossypium barbadense (Sea Island cotton).